A 742-amino-acid polypeptide reads, in one-letter code: Alcohol dehydrogenase (quinone), dehydrogenase subunit (742 aa).

The signal sequence occupies residues 1–35 (MTRPASAKRRSLLGILAAGTICAAALPYAAVPARA). E96 lines the pyrroloquinoline quinone pocket. Cysteines 142 and 143 form a disulfide. R148 serves as a coordination point for pyrroloquinoline quinone. E216 is a Ca(2+) binding site. T278 contributes to the pyrroloquinoline quinone binding site. Positions 298 and 343 each coordinate Ca(2+). D343 (proton acceptor) is an active-site residue. Positions 370 and 584 each coordinate pyrroloquinoline quinone. The region spanning 636–715 (KVVDNGYFQY…AIRQYLIKRA (80 aa)) is the Cytochrome c domain. C649, C652, H653, and M692 together coordinate heme c. The span at 722–732 (EVDARKNDKNI) shows a compositional bias: basic and acidic residues. Residues 722–742 (EVDARKNDKNIPENPTLGINP) are disordered.

This sequence belongs to the bacterial PQQ dehydrogenase family. The alcohol dehydrogenase multicomponent enzyme system is composed of a dehydrogenase subunit I (AdhA) and a cytochrome c subunit II (AdhB). Requires pyrroloquinoline quinone as cofactor. Ca(2+) is required as a cofactor. The cofactor is heme c.

The protein localises to the cell membrane. The enzyme catalyses ethanol + a ubiquinone = a ubiquinol + acetaldehyde. In terms of biological role, dehydrogenase component of the alcohol dehydrogenase multicomponent enzyme system which is involved in the production of acetic acid and in the ethanol oxidase respiratory chain. Quinohemoprotein alcohol dehydrogenase (ADH) catalyzes the oxidation of ethanol to acetaldehyde by transferring electrons to the ubiquinone embedded in the membrane phospholipids. The electrons transfer from ethanol to membranous ubiquinone occurs from pyrroloquinoline quinone (PQQ) to one heme c in subunit I (AdhA), and finally to two heme c in subunit II (AdhB). Besides ubiquinone reduction, ADH also has a ubiquinol (QH2) oxidation reaction which mediates electron transfer from ubiquinol to the non-energy generating bypass oxidase system. The electrons transfer occurs from ubiquinol (QH2) to the additional heme c within subunit II (AdhB). The polypeptide is Alcohol dehydrogenase (quinone), dehydrogenase subunit (Acetobacter aceti).